Reading from the N-terminus, the 213-residue chain is Holliday junction branch migration complex subunit RuvA (213 aa).

Positions methionine 1–alanine 64 are domain I. The domain II stretch occupies residues glutamine 65 to asparagine 143. The interval glutamine 144–aspartate 152 is flexible linker. The tract at residues aspartate 152–arginine 213 is domain III.

This sequence belongs to the RuvA family. Homotetramer. Forms an RuvA(8)-RuvB(12)-Holliday junction (HJ) complex. HJ DNA is sandwiched between 2 RuvA tetramers; dsDNA enters through RuvA and exits via RuvB. An RuvB hexamer assembles on each DNA strand where it exits the tetramer. Each RuvB hexamer is contacted by two RuvA subunits (via domain III) on 2 adjacent RuvB subunits; this complex drives branch migration. In the full resolvosome a probable DNA-RuvA(4)-RuvB(12)-RuvC(2) complex forms which resolves the HJ.

It localises to the cytoplasm. Functionally, the RuvA-RuvB-RuvC complex processes Holliday junction (HJ) DNA during genetic recombination and DNA repair, while the RuvA-RuvB complex plays an important role in the rescue of blocked DNA replication forks via replication fork reversal (RFR). RuvA specifically binds to HJ cruciform DNA, conferring on it an open structure. The RuvB hexamer acts as an ATP-dependent pump, pulling dsDNA into and through the RuvAB complex. HJ branch migration allows RuvC to scan DNA until it finds its consensus sequence, where it cleaves and resolves the cruciform DNA. The protein is Holliday junction branch migration complex subunit RuvA of Kocuria rhizophila (strain ATCC 9341 / DSM 348 / NBRC 103217 / DC2201).